The sequence spans 205 residues: Tumor suppressor candidate gene 1 protein homolog (205 aa).

The segment covering 1-12 (MWRMRGGATRRG) has biased composition (low complexity). Positions 1–49 (MWRMRGGATRRGSCGGEGGGSRGESGRLGRAREGGGGGGGVGWRGRAGG) are disordered. Residues 13–23 (SCGGEGGGSRG) are compositionally biased toward gly residues. Over residues 24-33 (ESGRLGRARE) the composition is skewed to basic and acidic residues. Positions 34-48 (GGGGGGGVGWRGRAG) are enriched in gly residues. A coiled-coil region spans residues 66–110 (LEALRARDERDRQNARLREENARLRLENRRLRRENRSLFRQALRL). Disordered regions lie at residues 113 to 149 (DSGE…SPRA) and 174 to 205 (GARP…RPWL). Serine 146 is modified (phosphoserine). Basic and acidic residues predominate over residues 196–205 (HDPDVPRPWL).

In Mus musculus (Mouse), this protein is Tumor suppressor candidate gene 1 protein homolog (Tusc1).